The primary structure comprises 139 residues: Small ribosomal subunit protein bS6 (139 aa).

The tract at residues S118–K139 is disordered. Over residues E126–K139 the composition is skewed to polar residues.

It belongs to the bacterial ribosomal protein bS6 family.

Functionally, binds together with bS18 to 16S ribosomal RNA. This chain is Small ribosomal subunit protein bS6, found in Borrelia garinii subsp. bavariensis (strain ATCC BAA-2496 / DSM 23469 / PBi) (Borreliella bavariensis).